Consider the following 149-residue polypeptide: Large ribosomal subunit protein uL16c (149 aa).

The protein belongs to the universal ribosomal protein uL16 family. As to quaternary structure, part of the 50S ribosomal subunit.

The protein resides in the plastid. It is found in the organellar chromatophore. This is Large ribosomal subunit protein uL16c (rpl16) from Paulinella chromatophora.